The sequence spans 232 residues: Phosphatidylserine decarboxylase proenzyme (232 aa).

Ser-190 (schiff-base intermediate with substrate; via pyruvic acid) is an active-site residue. The residue at position 190 (Ser-190) is a Pyruvic acid (Ser); by autocatalysis.

The protein belongs to the phosphatidylserine decarboxylase family. PSD-A subfamily. As to quaternary structure, heterodimer of a large membrane-associated beta subunit and a small pyruvoyl-containing alpha subunit. It depends on pyruvate as a cofactor. Is synthesized initially as an inactive proenzyme. Formation of the active enzyme involves a self-maturation process in which the active site pyruvoyl group is generated from an internal serine residue via an autocatalytic post-translational modification. Two non-identical subunits are generated from the proenzyme in this reaction, and the pyruvate is formed at the N-terminus of the alpha chain, which is derived from the carboxyl end of the proenzyme. The post-translation cleavage follows an unusual pathway, termed non-hydrolytic serinolysis, in which the side chain hydroxyl group of the serine supplies its oxygen atom to form the C-terminus of the beta chain, while the remainder of the serine residue undergoes an oxidative deamination to produce ammonia and the pyruvoyl prosthetic group on the alpha chain.

The protein resides in the cell membrane. It catalyses the reaction a 1,2-diacyl-sn-glycero-3-phospho-L-serine + H(+) = a 1,2-diacyl-sn-glycero-3-phosphoethanolamine + CO2. It functions in the pathway phospholipid metabolism; phosphatidylethanolamine biosynthesis; phosphatidylethanolamine from CDP-diacylglycerol: step 2/2. Its function is as follows. Catalyzes the formation of phosphatidylethanolamine (PtdEtn) from phosphatidylserine (PtdSer). In Methylocella silvestris (strain DSM 15510 / CIP 108128 / LMG 27833 / NCIMB 13906 / BL2), this protein is Phosphatidylserine decarboxylase proenzyme.